The primary structure comprises 275 residues: Pyridoxal phosphate homeostasis protein (275 aa).

Phosphoserine is present on serine 6. Position 47 is an N6-(pyridoxal phosphate)lysine (lysine 47). Tyrosine 69 is modified (phosphotyrosine). Lysine 125 carries the N6-succinyllysine modification. Serine 226 and serine 244 each carry phosphoserine.

The protein belongs to the pyridoxal phosphate-binding protein YggS/PROSC family.

Pyridoxal 5'-phosphate (PLP)-binding protein, which may be involved in intracellular homeostatic regulation of pyridoxal 5'-phosphate (PLP), the active form of vitamin B6. This Pongo abelii (Sumatran orangutan) protein is Pyridoxal phosphate homeostasis protein.